A 298-amino-acid chain; its full sequence is Transcription factor RHD6 (298 aa).

Disordered stretches follow at residues M1 to Q58 and T157 to R213. Low complexity predominate over residues S15–S27. Polar residues-rich tracts occupy residues T157–S168 and G177–V190. Positions T191–P205 are enriched in low complexity. Positions S201–R214 are basic motif. One can recognise a bHLH domain in the interval S201–L250. Positions E215–L250 are helix-loop-helix motif.

As to quaternary structure, homodimer. Forms heterodimers with RSL1. Interacts with TIFY10B/JAZ2, TIFY6A/JAZ4, TIFY5A/JAZ8, TIFY7/JAZ9 and TIFY9/JAZ10. Expressed constitutively in flowers. Expressed in root epidermal hair cells.

It is found in the nucleus. Transcription factor that is specifically required for the development of root hairs. Acts with RSL1 to positively regulate root hair development. Acts downstream of genes that regulate epidermal pattern formation, such as GL2. Targets directly RSL4, another transcription factor involved in the regulation of root hair elongation. Acts with RSL1 as transcription factor that integrates a jasmonate (JA) signaling pathway that stimulates root hair growth. In Arabidopsis thaliana (Mouse-ear cress), this protein is Transcription factor RHD6.